Reading from the N-terminus, the 505-residue chain is UDP-N-acetylmuramyl-tripeptide synthetase (505 aa).

Serine 35 serves as a coordination point for UDP-N-acetyl-alpha-D-muramoyl-L-alanyl-D-glutamate. An ATP-binding site is contributed by 118 to 124; it reads GTDGKSS. Residues 163–164, threonine 190, and arginine 200 each bind UDP-N-acetyl-alpha-D-muramoyl-L-alanyl-D-glutamate; that span reads ST. Lysine 232 bears the N6-carboxylysine mark.

It belongs to the MurCDEF family. MurE subfamily. Carboxylation is probably crucial for Mg(2+) binding and, consequently, for the gamma-phosphate positioning of ATP.

The protein resides in the cytoplasm. Its pathway is cell wall biogenesis; peptidoglycan biosynthesis. Its function is as follows. Catalyzes the addition of an amino acid to the nucleotide precursor UDP-N-acetylmuramoyl-L-alanyl-D-glutamate (UMAG) in the biosynthesis of bacterial cell-wall peptidoglycan. The polypeptide is UDP-N-acetylmuramyl-tripeptide synthetase (Borreliella afzelii (strain PKo) (Borrelia afzelii)).